We begin with the raw amino-acid sequence, 144 residues long: NADH-ubiquinone oxidoreductase chain 6 (144 aa).

The next 5 helical transmembrane spans lie at 1–21 (MVKV…INID), 25–45 (SSFF…MSMH), 46–66 (IWFS…ILVY), 79–99 (YMAV…VLTY), and 108–128 (FYYS…LFFM).

It belongs to the complex I subunit 6 family.

The protein resides in the mitochondrion membrane. It catalyses the reaction a ubiquinone + NADH + 5 H(+)(in) = a ubiquinol + NAD(+) + 4 H(+)(out). Its function is as follows. Core subunit of the mitochondrial membrane respiratory chain NADH dehydrogenase (Complex I) that is believed to belong to the minimal assembly required for catalysis. Complex I functions in the transfer of electrons from NADH to the respiratory chain. The immediate electron acceptor for the enzyme is believed to be ubiquinone. In Caenorhabditis elegans, this protein is NADH-ubiquinone oxidoreductase chain 6.